Here is a 745-residue protein sequence, read N- to C-terminus: 5-methyltetrahydropteroyltriglutamate--homocysteine methyltransferase (745 aa).

5-methyltetrahydropteroyltri-L-glutamate is bound by residues 16-19 (REWK) and K110. L-homocysteine is bound by residues 420–422 (IGS) and E473. L-methionine is bound by residues 420 to 422 (IGS) and E473. W550 provides a ligand contact to 5-methyltetrahydropteroyltri-L-glutamate. Residue D588 participates in L-homocysteine binding. D588 serves as a coordination point for L-methionine. 5-methyltetrahydropteroyltri-L-glutamate is bound at residue E594. Positions 630, 632, and 654 each coordinate Zn(2+). The active-site Proton donor is the H683. C715 is a binding site for Zn(2+).

The protein belongs to the vitamin-B12 independent methionine synthase family. Requires Zn(2+) as cofactor.

The catalysed reaction is 5-methyltetrahydropteroyltri-L-glutamate + L-homocysteine = tetrahydropteroyltri-L-glutamate + L-methionine. Its pathway is amino-acid biosynthesis; L-methionine biosynthesis via de novo pathway; L-methionine from L-homocysteine (MetE route): step 1/1. In terms of biological role, catalyzes the transfer of a methyl group from 5-methyltetrahydrofolate to homocysteine resulting in methionine formation. The polypeptide is 5-methyltetrahydropteroyltriglutamate--homocysteine methyltransferase (Streptococcus agalactiae serotype III (strain NEM316)).